We begin with the raw amino-acid sequence, 110 residues long: Large ribosomal subunit protein P2B (110 aa).

The residue at position 29 (S29) is a Phosphoserine. K49 is covalently cross-linked (Glycyl lysine isopeptide (Lys-Gly) (interchain with G-Cter in ubiquitin)). The disordered stretch occupies residues 66–110 (VPTGGASSAAAGAAGAAAGGDAAEEEKEEEAKEESDDDMGFGLFD). Over residues 69 to 86 (GGASSAAAGAAGAAAGGD) the composition is skewed to low complexity. The segment covering 87–104 (AAEEEKEEEAKEESDDDM) has biased composition (acidic residues). S100 is modified (phosphoserine).

It belongs to the eukaryotic ribosomal protein P1/P2 family. As to quaternary structure, component of the large ribosomal subunit (LSU). Mature yeast ribosomes consist of a small (40S) and a large (60S) subunit. The 40S small subunit contains 1 molecule of ribosomal RNA (18S rRNA) and 33 different proteins (encoded by 57 genes). The large 60S subunit contains 3 rRNA molecules (25S, 5.8S and 5S rRNA) and 46 different proteins (encoded by 81 genes). The 5 acidic ribosomal P-proteins form the stalk structure of the 60S subunit. They are organized as a pentameric complex in which uL10/P0 interacts with 2 heterodimers, P1A-P2B and P1B-P2A. Post-translationally, the N-terminus is not modified.

Its subcellular location is the cytoplasm. Its function is as follows. Component of the ribosome, a large ribonucleoprotein complex responsible for the synthesis of proteins in the cell. The small ribosomal subunit (SSU) binds messenger RNAs (mRNAs) and translates the encoded message by selecting cognate aminoacyl-transfer RNA (tRNA) molecules. The large subunit (LSU) contains the ribosomal catalytic site termed the peptidyl transferase center (PTC), which catalyzes the formation of peptide bonds, thereby polymerizing the amino acids delivered by tRNAs into a polypeptide chain. The nascent polypeptides leave the ribosome through a tunnel in the LSU and interact with protein factors that function in enzymatic processing, targeting, and the membrane insertion of nascent chains at the exit of the ribosomal tunnel. This chain is Large ribosomal subunit protein P2B, found in Saccharomyces cerevisiae (strain ATCC 204508 / S288c) (Baker's yeast).